A 420-amino-acid polypeptide reads, in one-letter code: Serine hydroxymethyltransferase (420 aa).

Residues leucine 121 and 125-127 each bind (6S)-5,6,7,8-tetrahydrofolate; that span reads GHL. Position 230 is an N6-(pyridoxal phosphate)lysine (lysine 230). 355 to 357 is a (6S)-5,6,7,8-tetrahydrofolate binding site; it reads SPF.

It belongs to the SHMT family. In terms of assembly, homodimer. The cofactor is pyridoxal 5'-phosphate.

It localises to the cytoplasm. The enzyme catalyses (6R)-5,10-methylene-5,6,7,8-tetrahydrofolate + glycine + H2O = (6S)-5,6,7,8-tetrahydrofolate + L-serine. It participates in one-carbon metabolism; tetrahydrofolate interconversion. Its pathway is amino-acid biosynthesis; glycine biosynthesis; glycine from L-serine: step 1/1. Functionally, catalyzes the reversible interconversion of serine and glycine with tetrahydrofolate (THF) serving as the one-carbon carrier. This reaction serves as the major source of one-carbon groups required for the biosynthesis of purines, thymidylate, methionine, and other important biomolecules. Also exhibits THF-independent aldolase activity toward beta-hydroxyamino acids, producing glycine and aldehydes, via a retro-aldol mechanism. This chain is Serine hydroxymethyltransferase, found in Streptococcus mutans serotype c (strain ATCC 700610 / UA159).